The chain runs to 248 residues: Eukaryotic translation initiation factor 6 (248 aa).

The protein belongs to the eIF-6 family. As to quaternary structure, monomer. Associates with the 60S ribosomal subunit.

The protein localises to the cytoplasm. The protein resides in the nucleus. It is found in the nucleolus. Its function is as follows. Binds to the 60S ribosomal subunit and prevents its association with the 40S ribosomal subunit to form the 80S initiation complex in the cytoplasm. May also be involved in ribosome biogenesis. The sequence is that of Eukaryotic translation initiation factor 6 from Trypanosoma cruzi (strain CL Brener).